A 1242-amino-acid polypeptide reads, in one-letter code: Myosin-16 (1242 aa).

In terms of domain architecture, Myosin N-terminal SH3-like spans 6–55; sequence MVDSHVWVEDPERAWIDGVVLNIKGEEAEIKTNDGRDVIANLSRLYPKDT. One can recognise a Myosin motor domain in the interval 60 to 729; it reads EGVEDMTRLS…QMAELDAHRT (670 aa). ATP contacts are provided by residues 154–161 and 207–215; these read GESGSGKT and NNNSSRFGK. Actin-binding stretches follow at residues 493 to 527, 529 to 552, 587 to 610, and 610 to 632; these read LIEK…YHTF, DHKR…AGDV, FPPL…KLQL, and LQQL…KPNN. IQ domains follow at residues 732 to 761, 755 to 784, 780 to 809, 803 to 832, 828 to 857, and 851 to 880; these read LGES…ASVN, MRRA…EEAA, REEA…SALT, TKSS…TRAA, TTRA…VSLL, and LKRV…ADRK. 2 disordered regions span residues 869-893 and 908-1042; these read KQLG…ELSN and EQSD…ERKT. Positions 876–893 are enriched in basic and acidic residues; that stretch reads QADRKEETEKERKVELSN. A run of 6 repeats spans residues 876-908, 909-940, 941-965, 966-997, 998-1029, and 1030-1061. Residues 876 to 1061 are 6 X 33 AA repeats of Q-S-D-D-x-E-E-x(2)-H-x-R-K-x-K-x(2)-I-x(2)-E-D-G-x(3)-S-x-V-x-H-S-x; that stretch reads QADRKEETEK…IQKSFVTCSE (186 aa). Residues 948–966 are compositionally biased toward basic and acidic residues; that stretch reads GHERKTKLSIESEDGHSDQ. Residues 1079 to 1142 are a coiled coil; that stretch reads DTEIESLTAE…QLQDSLNRLL (64 aa). The interval 1175–1242 is disordered; the sequence is DLADSSENSE…DKEGGFEDYF (68 aa). Positions 1179–1191 are enriched in low complexity; the sequence is SSENSEASSSDSD. Over residues 1199 to 1224 the composition is skewed to polar residues; the sequence is PSSDNFSTFNPNQLQVIVQDLSTTEA. Over residues 1225 to 1242 the composition is skewed to basic and acidic residues; the sequence is KGTESYDSDKEGGFEDYF.

It belongs to the TRAFAC class myosin-kinesin ATPase superfamily. Myosin family. Plant myosin class XI subfamily. As to quaternary structure, homodimer. In terms of tissue distribution, expressed in flowers and leaves.

It localises to the cytoplasm. Functionally, myosin heavy chain that is required for the cell cycle-regulated transport of various organelles and proteins for their segregation. Functions by binding with its tail domain to receptor proteins on organelles and exerting force with its N-terminal motor domain against actin filaments, thereby transporting its cargo along polarized actin cables. The polypeptide is Myosin-16 (XI-J) (Arabidopsis thaliana (Mouse-ear cress)).